Consider the following 519-residue polypeptide: Threonine synthase, chloroplastic (519 aa).

The N-terminal 40 residues, 1–40, are a transit peptide targeting the chloroplast; it reads MAASCMLRSSFISPGLPQLHHQSTSKPNNGIHFFTPIKAT. N6-(pyridoxal phosphate)lysine is present on Lys-196. Pyridoxal 5'-phosphate is bound by residues 328–332 and Thr-465; that span reads GNLGN.

The protein belongs to the threonine synthase family. Homodimer. Requires pyridoxal 5'-phosphate as cofactor.

It localises to the plastid. Its subcellular location is the chloroplast. The enzyme catalyses O-phospho-L-homoserine + H2O = L-threonine + phosphate. Its pathway is amino-acid biosynthesis; L-threonine biosynthesis; L-threonine from L-aspartate: step 5/5. Allosterically activated by S-adenosyl-methionine (SAM). In terms of biological role, catalyzes the gamma-elimination of phosphate from L-phosphohomoserine and the beta-addition of water to produce L-threonine. The polypeptide is Threonine synthase, chloroplastic (Solanum tuberosum (Potato)).